The following is a 939-amino-acid chain: Translation initiation factor IF-2 (939 aa).

A compositionally biased stretch (basic and acidic residues) spans 81 to 94; it reads EEQSRKAYEKEQQL. Disordered stretches follow at residues 81–303 and 316–337; these read EEQS…KKVE and TISGMDDSGSSGSRQKFRKMRR. A compositionally biased stretch (low complexity) spans 99–108; it reads SSAPSPAPAA. Basic and acidic residues-rich tracts occupy residues 112–127 and 148–173; these read EPVKEPFVEIPARHEP and SPKEEVVATKAPEAEAKPVEQPEKAA. Residues 178–189 are compositionally biased toward low complexity; it reads EAQPEAQSQQEP. Over residues 244 to 255 the composition is skewed to basic and acidic residues; the sequence is FKENAAELKDEF. Residues 276-287 show a composition bias toward low complexity; the sequence is AAGEGESTTGGE. The segment covering 292 to 301 has biased composition (basic residues); it reads KKKKGKKKKK. Residues 318 to 328 show a composition bias toward low complexity; sequence SGMDDSGSSGS. The region spanning 436–606 is the tr-type G domain; sequence TRPPVVTIMG…LTEAEVRELK (171 aa). The interval 445–452 is G1; that stretch reads GHVDHGKT. 445-452 is a GTP binding site; the sequence is GHVDHGKT. Positions 470-474 are G2; it reads GITQH. The G3 stretch occupies residues 492–495; that stretch reads DTPG. GTP contacts are provided by residues 492 to 496 and 546 to 549; these read DTPGH and NKID. Residues 546-549 form a G4 region; it reads NKID. Positions 582–584 are G5; that stretch reads SAK.

It belongs to the TRAFAC class translation factor GTPase superfamily. Classic translation factor GTPase family. IF-2 subfamily.

The protein localises to the cytoplasm. One of the essential components for the initiation of protein synthesis. Protects formylmethionyl-tRNA from spontaneous hydrolysis and promotes its binding to the 30S ribosomal subunits. Also involved in the hydrolysis of GTP during the formation of the 70S ribosomal complex. This is Translation initiation factor IF-2 from Chlorobaculum parvum (strain DSM 263 / NCIMB 8327) (Chlorobium vibrioforme subsp. thiosulfatophilum).